Here is a 227-residue protein sequence, read N- to C-terminus: MQLCVALDLEKKEDNLSLLQELKGLDLWAKVGLRSFIRDGATFLDEIRKIDGNFKIFLDLKLYDIPYTMANAALECAKLDIDMLTVHLSSAKSALTILMQRLNALKKRPLIMGVSALTSFSEEEFLMVYNAPLKTQAITLSAIGKESGIDGVVCSVFESLAIKEALGKGFLTLTPGIRLDKNDKEDQERVANAKEAKQNLSDFIVVGRPIYQAKEPREVVLELLKDC.

Residues Asp8, Lys30, 59–68 (DLKLYDIPYT), Thr118, Arg178, Gln187, Gly207, and Arg208 each bind substrate. Lys61 (proton donor) is an active-site residue.

It belongs to the OMP decarboxylase family. Type 1 subfamily. As to quaternary structure, homodimer.

The catalysed reaction is orotidine 5'-phosphate + H(+) = UMP + CO2. It participates in pyrimidine metabolism; UMP biosynthesis via de novo pathway; UMP from orotate: step 2/2. Functionally, catalyzes the decarboxylation of orotidine 5'-monophosphate (OMP) to uridine 5'-monophosphate (UMP). In Helicobacter pylori (strain J99 / ATCC 700824) (Campylobacter pylori J99), this protein is Orotidine 5'-phosphate decarboxylase.